Reading from the N-terminus, the 141-residue chain is Large ribosomal subunit protein uL11 (141 aa).

It belongs to the universal ribosomal protein uL11 family. In terms of assembly, part of the ribosomal stalk of the 50S ribosomal subunit. Interacts with L10 and the large rRNA to form the base of the stalk. L10 forms an elongated spine to which L12 dimers bind in a sequential fashion forming a multimeric L10(L12)X complex. In terms of processing, one or more lysine residues are methylated.

In terms of biological role, forms part of the ribosomal stalk which helps the ribosome interact with GTP-bound translation factors. The chain is Large ribosomal subunit protein uL11 from Clostridium botulinum (strain Alaska E43 / Type E3).